Reading from the N-terminus, the 46-residue chain is Defensin Tk-AMP-D5 (46 aa).

4 cysteine pairs are disulfide-bonded: Cys-3-Cys-46, Cys-14-Cys-34, Cys-20-Cys-40, and Cys-24-Cys-42.

Functionally, plant defense peptide. This is Defensin Tk-AMP-D5 from Triticum kiharae (Wheat).